Consider the following 299-residue polypeptide: Acetylglutamate kinase (299 aa).

Substrate-binding positions include 70 to 71 (GG), Arg92, and Asn186.

The protein belongs to the acetylglutamate kinase family. ArgB subfamily.

Its subcellular location is the cytoplasm. The enzyme catalyses N-acetyl-L-glutamate + ATP = N-acetyl-L-glutamyl 5-phosphate + ADP. Its pathway is amino-acid biosynthesis; L-arginine biosynthesis; N(2)-acetyl-L-ornithine from L-glutamate: step 2/4. Its function is as follows. Catalyzes the ATP-dependent phosphorylation of N-acetyl-L-glutamate. This chain is Acetylglutamate kinase, found in Petrotoga mobilis (strain DSM 10674 / SJ95).